We begin with the raw amino-acid sequence, 720 residues long: Glutaryl-7-aminocephalosporanic-acid acylase (720 aa).

The N-terminal stretch at 1-29 (MLRVLHRAASALVMATVIGLAPAVAFALA) is a signal peptide. Positions 190–198 (DPPDLADQG) are cleaved as a propeptide — spacer peptide. Catalysis depends on serine 199, which acts as the Nucleophile. Active-site residues include histidine 221 and glutamate 653.

This sequence belongs to the peptidase S45 family. In terms of assembly, heterotetramer of two alpha and two beta subunits processed from the same precursor.

It localises to the periplasm. The catalysed reaction is (7R)-7-(4-carboxybutanamido)cephalosporanate + H2O = (7R)-7-aminocephalosporanate + glutarate. Catalyzes the deacylation of 7 beta-(4-carboxybutanamido)cephalosporanic acid (glutaryl-7-aminocephalosporanic acid or GL-7-ACA) to 7-aminocephalosporanic acid (7-ACA). The polypeptide is Glutaryl-7-aminocephalosporanic-acid acylase (Pseudomonas sp. (strain SY-77)).